Here is a 278-residue protein sequence, read N- to C-terminus: UPF0276 protein Sama_1305 (278 aa).

The protein belongs to the UPF0276 family.

This is UPF0276 protein Sama_1305 from Shewanella amazonensis (strain ATCC BAA-1098 / SB2B).